A 124-amino-acid chain; its full sequence is Fluoride-specific ion channel FluC (124 aa).

4 helical membrane passes run 1–21 (MGVVFAVALGGAIGSALRFLL), 35–55 (VGTLFVNLVGAFFIGFFFAYL), 68–88 (LLITGLLGGLTTFSTYSYESF), and 99–119 (FLAYTLGTNVLGIFFTFLGYI). Gly75 and Thr78 together coordinate Na(+).

This sequence belongs to the fluoride channel Fluc/FEX (TC 1.A.43) family.

It localises to the cell inner membrane. The enzyme catalyses fluoride(in) = fluoride(out). Its activity is regulated as follows. Na(+) is not transported, but it plays an essential structural role and its presence is essential for fluoride channel function. Its function is as follows. Fluoride-specific ion channel. Important for reducing fluoride concentration in the cell, thus reducing its toxicity. The protein is Fluoride-specific ion channel FluC of Aquifex aeolicus (strain VF5).